A 687-amino-acid chain; its full sequence is MSKIRVYELAKELNVSSKDLITLLMDEFGVEVKNHMSTIEDEEAQLIKELLATKPEYIEGSLEDSKSLVDEYEEILQNELNKAKKKRKKNKREDKDDENEELETEVIEIGETITVKELAEKLNKPSNDVIRTLIFSGVMAAINQEIDFATAEKVCESYGVILEKLEVTEELEAVEAEDDDEENLTKRPPIVTVMGHVDHGKTSLLDAIRKAKVTDTEAGGITQHIGAYTININGEEITFLDTPGHEAFTAMRARGAQVTDVVILVVAADDGIMPQTKEAINHCKAAGVPMVVAINKIDKPGANPDRVKQELTEHGLVVEEWGGDTICEEVSAKSNLNIEKLLEMVLLTAEMLELKANKERKAKGTVIEAKLDKGRGSVATLLVQNGTLHVGDAIIVGSTYGRIRAMFDDTGKKIKSAGPSIPVEVLGLSEVPEAGDRFNQVKDEKTARIMADKRKDKEKSDSLMSGNRVSLEDLYSQIKEGKVKELGIIVKADVQGSVQAINQSLEKLSTDDVKVRVIHSGVGAITETDITLATASNAIVIGFNVRPDNNAVAQADKENVEIKTYRIIYDAIEDVKSAMIGMLEPEYKEVILGSAEVRETYKISNVGTIAGCYVLNGKLQRNAETRVIRDGIVIFESNLSSLKRFKDDVKEVNTGYECGLTVEKFNDVKEGDILECFMMEAIKRKEL.

The tr-type G domain occupies 186 to 355 (KRPPIVTVMG…LLTAEMLELK (170 aa)). Residues 195 to 202 (GHVDHGKT) form a G1 region. 195-202 (GHVDHGKT) is a GTP binding site. The segment at 220–224 (GITQH) is G2. A G3 region spans residues 241–244 (DTPG). GTP contacts are provided by residues 241 to 245 (DTPGH) and 295 to 298 (NKID). The interval 295–298 (NKID) is G4. The segment at 331 to 333 (SAK) is G5.

Belongs to the TRAFAC class translation factor GTPase superfamily. Classic translation factor GTPase family. IF-2 subfamily.

It is found in the cytoplasm. In terms of biological role, one of the essential components for the initiation of protein synthesis. Protects formylmethionyl-tRNA from spontaneous hydrolysis and promotes its binding to the 30S ribosomal subunits. Also involved in the hydrolysis of GTP during the formation of the 70S ribosomal complex. The chain is Translation initiation factor IF-2 from Clostridium botulinum (strain Eklund 17B / Type B).